Here is a 361-residue protein sequence, read N- to C-terminus: Pyruvate dehydrogenase E1 component subunit beta, mitochondrial (361 aa).

Residues 1–27 (MAVNGCMRLLRNGLTSACALEQSVRRL) constitute a mitochondrion transit peptide. Glu90 contributes to the thiamine diphosphate binding site. 5 residues coordinate K(+): Ile143, Ala191, Val192, Asp194, and Asn196.

As to quaternary structure, heterotetramer of two PDHA1 and two PDHB subunits. The heterotetramer interacts with DLAT, and is part of the multimeric pyruvate dehydrogenase complex that contains multiple copies of pyruvate dehydrogenase (E1), dihydrolipoamide acetyltransferase (DLAT, E2) and lipoamide dehydrogenase (DLD, E3). The cofactor is thiamine diphosphate.

It is found in the mitochondrion matrix. The enzyme catalyses N(6)-[(R)-lipoyl]-L-lysyl-[protein] + pyruvate + H(+) = N(6)-[(R)-S(8)-acetyldihydrolipoyl]-L-lysyl-[protein] + CO2. Functionally, the pyruvate dehydrogenase complex catalyzes the overall conversion of pyruvate to acetyl-CoA and CO(2), and thereby links the glycolytic pathway to the tricarboxylic cycle. In Ascaris suum (Pig roundworm), this protein is Pyruvate dehydrogenase E1 component subunit beta, mitochondrial.